The sequence spans 370 residues: Ubiquitin carboxyl-terminal hydrolase 12 (370 aa).

Positions 1–4 match the Required for plasma membrane localization of USP12/WDR20 motif; the sequence is MEIL. The region spanning 39 to 369 is the USP domain; the sequence is FGLVNFGNTC…SGYILFYQSR (331 aa). The active-site Nucleophile is the Cys48. A disordered region spans residues 145 to 169; the sequence is KQEKQNGRLPNGNIDNENNNSTPDP. The span at 157–168 shows a compositional bias: polar residues; the sequence is NIDNENNNSTPD. Positions 186, 189, 233, and 236 each coordinate Zn(2+). His317 functions as the Proton acceptor in the catalytic mechanism.

It belongs to the peptidase C19 family. USP12/USP46 subfamily. Interacts with WDR48. Interacts with WDR20; this interaction promotes translocation of the USP12 complex to the plasma membrane. Component of the USP12-WDR20-WDR48 deubiquitinating complex. Component of the USP12-DMWD-WDR48 deubiquitinating complex. Interacts with PHLPP1. Interacts with RBPJ. Interacts with CBP; this interaction blocks the acetyltransferase activity of CREBBP. Interacts with ITCH; the interaction is more efficient when both USP12 and WDR48/UAF1 are involved and may mediate recruitment of the USP12 deubiquitinating complex to Notch. Interacts with OPTN and SQSTM1/p62; the interaction is independent of deubiquitinase activity and may be involved in regulation of autophagic flux. As to quaternary structure, (Microbial infection) Interacts with Epstein-Barr virus protein EBNA3.

It is found in the nucleus. The protein localises to the cytoplasm. Its subcellular location is the cell membrane. The catalysed reaction is Thiol-dependent hydrolysis of ester, thioester, amide, peptide and isopeptide bonds formed by the C-terminal Gly of ubiquitin (a 76-residue protein attached to proteins as an intracellular targeting signal).. With respect to regulation, activated by interaction with WDR20, WDR48 and DMWD through different allosteric mechanisms. In terms of biological role, deubiquitinating enzyme that plays various roles in the regulation of the immune response and inflammation. During TCR engagement and activation, translocates into the cytoplasm and deubiquitinates its substrates LAT and TRAT1 and prevents their lysosome-dependent degradation to stabilize the TCR signaling complex at the plasma membrane. Plays an essential role in the selective LPS-induced macrophage response through the activation of NF-kappa-B pathway. In addition, promotes that antiviral immune response through targeting DNA sensor IFI16 to inhibit its proteasome-dependent degradation. Participates in the interferon signaling pathway and antiviral response independently of its deubiquitinase activity by maintaining nuclear phosphorylated STAT1 levels via inhibition of its CREBBP-mediated acetylation and subsequent dephosphorylation. Plays an intrinsic role in promoting the differentiation, activation and proliferation of CD4(+) T-cell by activating the NF-kappa-B signaling pathway through deubiquitinating and stabilizing B-cell lymphoma/leukemia 10/BCL10. In myeloid-derived suppressor cells promotes the activation of the NF-kappa-B via deubiquitination and stabilization of RELA. Regulates the 'Lys-63'-linked polyubiquitin chains of BAX and thereby modulates the mitochondrial apoptotic process. Negative regulator of NOTCH signaling that specifically deubiquitinates non-activated NOTCH receptors to target them for lysosomal degradation; deubiquitination of NOTCH stimulates its transport form late endosomes to lysosomes. Protects neurons against HTT/huntingtin-induced polyglutamine expansion-dependent neurodegeneration through regulation of autophagic flux. This function is independent of deubiquitinase activity or of other components of the USP12-WDR20-WDR48 deubiquitinating complex. In complex with WDR48, acts as a potential tumor suppressor by positively regulating PHLPP1 stability. (Microbial infection) Forms a complex with Epstein-Barr virus protein EBNA3 which is an active deubiquitinase activity that may select specific substrates to promote B-lymphocyte transformation. This chain is Ubiquitin carboxyl-terminal hydrolase 12 (USP12), found in Homo sapiens (Human).